We begin with the raw amino-acid sequence, 313 residues long: Olfactory receptor 10K1 (313 aa).

Topologically, residues 1–25 are extracellular; the sequence is MEQVNKTVVREFVVLGFSSLARLQQ. Asparagine 5 carries N-linked (GlcNAc...) asparagine glycosylation. A helical transmembrane segment spans residues 26-46; the sequence is LLFVIFLLLYLFTLGTNAIII. At 47–54 the chain is on the cytoplasmic side; that stretch reads STIVLDRA. Residues 55 to 75 traverse the membrane as a helical segment; the sequence is LHTPMYFFLAILSCSEICYTF. Residues 76–99 are Extracellular-facing; sequence VIVPKMLVDLLSQKKTISFLGCAI. The chain crosses the membrane as a helical span at residues 100-120; it reads QMFSFLFFGSSHSFLLAAMGY. At 121–139 the chain is on the cytoplasmic side; that stretch reads DRYMAICNPLRYSVLMGHG. A helical transmembrane segment spans residues 140-160; the sequence is VCMGLMAAACACGFTVSLVTT. Topologically, residues 161-197 are extracellular; sequence SLVFHLPFHSSNQLHHFFCDISPVLKLASQHSGFSQL. Residues 198–217 form a helical membrane-spanning segment; the sequence is VIFMLGVFALVIPLLLILVS. Topologically, residues 218 to 237 are cytoplasmic; that stretch reads YIRIISAILKIPSSVGRYKT. A helical transmembrane segment spans residues 238-258; it reads FSTCASHLIVVTVHYSCASFI. The Extracellular segment spans residues 259-271; it reads YLRPKTNYTSSQD. Asparagine 265 carries an N-linked (GlcNAc...) asparagine glycan. Residues 272–292 form a helical membrane-spanning segment; that stretch reads TLISVSYTILTPLFNPMIYSL. At 293 to 313 the chain is on the cytoplasmic side; the sequence is RNKEFKSALRRTIGQTFYPLS.

It belongs to the G-protein coupled receptor 1 family.

The protein localises to the cell membrane. Functionally, odorant receptor. This chain is Olfactory receptor 10K1 (OR10K1), found in Homo sapiens (Human).